Reading from the N-terminus, the 248-residue chain is 1-(5-phosphoribosyl)-5-[(5-phosphoribosylamino)methylideneamino] imidazole-4-carboxamide isomerase (248 aa).

The Proton acceptor role is filled by aspartate 8. Aspartate 129 functions as the Proton donor in the catalytic mechanism.

It belongs to the HisA/HisF family.

It localises to the cytoplasm. The enzyme catalyses 1-(5-phospho-beta-D-ribosyl)-5-[(5-phospho-beta-D-ribosylamino)methylideneamino]imidazole-4-carboxamide = 5-[(5-phospho-1-deoxy-D-ribulos-1-ylimino)methylamino]-1-(5-phospho-beta-D-ribosyl)imidazole-4-carboxamide. The protein operates within amino-acid biosynthesis; L-histidine biosynthesis; L-histidine from 5-phospho-alpha-D-ribose 1-diphosphate: step 4/9. The protein is 1-(5-phosphoribosyl)-5-[(5-phosphoribosylamino)methylideneamino] imidazole-4-carboxamide isomerase of Desulfitobacterium hafniense (strain Y51).